The chain runs to 389 residues: Probable nitrate transporter NarT (389 aa).

A run of 12 helical transmembrane segments spans residues 14–34 (TLSLVVGFMAWSIIAPLMPFI), 45–65 (ISIILAIPVILGSVLRVPFGY), 69–89 (IVGAKWVFFTSFIVLLFPIFF), 97–117 (GMLMASGFFLGVGGAIFSVGV), 139–159 (GNIGTAVSSFLAPPIAGIIGW), 161–181 (TTVRSYLIIIALFALIMFIFG), 211–231 (WYFITFGAFVAFGIFLPNYLV), 246–266 (GVFIALATFLRPIGGILGDKF), 268–288 (AVKVLMIDFVIMIIGAVILGI), 294–314 (LFTVGCLTISICAGIGNGLIF), 331–351 (IVSMMGGLGGFFPPLVITYVA), and 353–373 (LTGSSHLAFIFLAVFGCIALF).

The protein belongs to the major facilitator superfamily. Nitrate/nitrite porter (TC 2.A.1.8) family.

It is found in the cell membrane. Its function is as follows. Probably required for nitrate uptake under anoxic conditions. Also possibly involved in excretion of nitrite produced by the dissimilatory reduction of nitrate. The sequence is that of Probable nitrate transporter NarT (narT) from Staphylococcus aureus (strain JH9).